Here is a 159-residue protein sequence, read N- to C-terminus: Bacterioferritin (159 aa).

The Ferritin-like diiron domain occupies 1-145 (MQGDPEVLRL…TQLELMDKLG (145 aa)). Glu-51 is a binding site for Fe cation. A heme b-binding site is contributed by Met-52. The Fe cation site is built by His-54, Glu-94, Glu-127, and His-130.

This sequence belongs to the bacterioferritin family. In terms of assembly, homooligomer of 24 subunits, arranged as 12 dimers, that are packed together to form an approximately spherical molecule with a central cavity, in which large amounts of iron can be deposited. Heme b is required as a cofactor.

It carries out the reaction 4 Fe(2+) + O2 + 4 H(+) = 4 Fe(3+) + 2 H2O. The catalysed reaction is Fe(2+)(in) = Fe(2+)(out). Its function is as follows. Iron-storage protein, whose ferroxidase center binds Fe(2+), oxidizes it using dioxygen to Fe(3+), and participates in the subsequent Fe(3+) oxide mineral core formation within the central cavity of the BFR protein shell. This chain is Bacterioferritin (bfr), found in Mycobacterium avium.